A 289-amino-acid polypeptide reads, in one-letter code: 4-diphosphocytidyl-2-C-methyl-D-erythritol kinase (289 aa).

Residue K11 is part of the active site. 96–106 contacts ATP; sequence PVAAGIGGGSS. D138 is a catalytic residue.

It belongs to the GHMP kinase family. IspE subfamily.

It carries out the reaction 4-CDP-2-C-methyl-D-erythritol + ATP = 4-CDP-2-C-methyl-D-erythritol 2-phosphate + ADP + H(+). It functions in the pathway isoprenoid biosynthesis; isopentenyl diphosphate biosynthesis via DXP pathway; isopentenyl diphosphate from 1-deoxy-D-xylulose 5-phosphate: step 3/6. In terms of biological role, catalyzes the phosphorylation of the position 2 hydroxy group of 4-diphosphocytidyl-2C-methyl-D-erythritol. This Azorhizobium caulinodans (strain ATCC 43989 / DSM 5975 / JCM 20966 / LMG 6465 / NBRC 14845 / NCIMB 13405 / ORS 571) protein is 4-diphosphocytidyl-2-C-methyl-D-erythritol kinase.